A 256-amino-acid chain; its full sequence is Triosephosphate isomerase (256 aa).

Asparagine 9 to lysine 11 is a substrate binding site. The active-site Electrophile is the histidine 95. Glutamate 167 serves as the catalytic Proton acceptor. Substrate-binding positions include glycine 173, serine 212, and glycine 233–glycine 234.

This sequence belongs to the triosephosphate isomerase family. As to quaternary structure, homodimer.

Its subcellular location is the cytoplasm. It carries out the reaction D-glyceraldehyde 3-phosphate = dihydroxyacetone phosphate. The protein operates within carbohydrate biosynthesis; gluconeogenesis. Its pathway is carbohydrate degradation; glycolysis; D-glyceraldehyde 3-phosphate from glycerone phosphate: step 1/1. In terms of biological role, involved in the gluconeogenesis. Catalyzes stereospecifically the conversion of dihydroxyacetone phosphate (DHAP) to D-glyceraldehyde-3-phosphate (G3P). This is Triosephosphate isomerase from Proteus mirabilis (strain HI4320).